Here is a 152-residue protein sequence, read N- to C-terminus: Large ribosomal subunit protein bL9 (152 aa).

Belongs to the bacterial ribosomal protein bL9 family.

Binds to the 23S rRNA. The sequence is that of Large ribosomal subunit protein bL9 from Nostoc sp. (strain PCC 7120 / SAG 25.82 / UTEX 2576).